Here is a 99-residue protein sequence, read N- to C-terminus: ATP synthase subunit c (99 aa).

2 consecutive transmembrane segments (helical) span residues 23–43 and 78–98; these read GAGIGYGLVAVGAGLAMIGAL and MGIAETAAIYSLIIAILLIFV.

Belongs to the ATPase C chain family. In terms of assembly, F-type ATPases have 2 components, F(1) - the catalytic core - and F(0) - the membrane proton channel. F(1) has five subunits: alpha(3), beta(3), gamma(1), delta(1), epsilon(1). F(0) has three main subunits: a(1), b(2) and c(10-14). The alpha and beta chains form an alternating ring which encloses part of the gamma chain. F(1) is attached to F(0) by a central stalk formed by the gamma and epsilon chains, while a peripheral stalk is formed by the delta and b chains.

Its subcellular location is the cell membrane. In terms of biological role, f(1)F(0) ATP synthase produces ATP from ADP in the presence of a proton or sodium gradient. F-type ATPases consist of two structural domains, F(1) containing the extramembraneous catalytic core and F(0) containing the membrane proton channel, linked together by a central stalk and a peripheral stalk. During catalysis, ATP synthesis in the catalytic domain of F(1) is coupled via a rotary mechanism of the central stalk subunits to proton translocation. Functionally, key component of the F(0) channel; it plays a direct role in translocation across the membrane. A homomeric c-ring of between 10-14 subunits forms the central stalk rotor element with the F(1) delta and epsilon subunits. The protein is ATP synthase subunit c of Mycoplasma mobile (strain ATCC 43663 / 163K / NCTC 11711) (Mesomycoplasma mobile).